We begin with the raw amino-acid sequence, 179 residues long: Adenine phosphoribosyltransferase (179 aa).

Belongs to the purine/pyrimidine phosphoribosyltransferase family. Homodimer.

The protein localises to the cytoplasm. It catalyses the reaction AMP + diphosphate = 5-phospho-alpha-D-ribose 1-diphosphate + adenine. The protein operates within purine metabolism; AMP biosynthesis via salvage pathway; AMP from adenine: step 1/1. Functionally, catalyzes a salvage reaction resulting in the formation of AMP, that is energically less costly than de novo synthesis. The polypeptide is Adenine phosphoribosyltransferase (Helicobacter pylori (strain HPAG1)).